The following is a 327-amino-acid chain: Gamma-resorcylate decarboxylase (327 aa).

Residues E8, H10, H164, and D287 each contribute to the Zn(2+) site. D287 is a catalytic residue.

It belongs to the metallo-dependent hydrolases superfamily. ACMSD family. As to quaternary structure, homotetramer. Zn(2+) serves as cofactor.

It catalyses the reaction 2,6-dihydroxybenzoate + H(+) = resorcinol + CO2. It carries out the reaction 2,3-dihydroxybenzoate + H(+) = catechol + CO2. It participates in aromatic compound metabolism. Its activity is regulated as follows. Insensitive to oxygen. Decarboxylation and carboxylation are inhibited by AgNO(3) and by diethyl pyrocarbonate, a histidine residue-specific inhibitor. Decarboxylation is also inhibited by HgCl(2) and activated by MgCl(2). Functionally, involved in the gamma-resorcylate (2,6-dihydroxybenzoate) catabolism. Catalyzes the reversible decarboxylation of gamma-resorcylate to resorcinol. Also catalyzes the decarboxylation of 2,3-dihydroxybenzoate to catechol, but does not act on 2-hydroxybenzoic acid 3-hydroxybenzoic acid, 4-hydroxybenzoic acid, 3,4-dihydroxybenzoic acid, 2,5-dihydroxybenzoic acid, 2,3,4-trihydroxybenzoic acid, 3,4,5-trihydroxybenzoic acid, 4-aminobenzoic acid, o-hydroxyphenylacetic acid and vanillic acid. Resorcinol and catechol can both be carboxylated by the reverse reaction. The polypeptide is Gamma-resorcylate decarboxylase (Rhizobium radiobacter (Agrobacterium tumefaciens)).